Here is a 155-residue protein sequence, read N- to C-terminus: DNA-directed RNA polymerase 1A (155 aa).

Asp88 is a catalytic residue.

The protein belongs to the phage and mitochondrial RNA polymerase family.

It carries out the reaction RNA(n) + a ribonucleoside 5'-triphosphate = RNA(n+1) + diphosphate. In terms of biological role, DNA-dependent RNA polymerase catalyzes the transcription of DNA into RNA using the four ribonucleoside triphosphates as substrates. The polypeptide is DNA-directed RNA polymerase 1A (RPOT1-SYL) (Nicotiana tabacum (Common tobacco)).